The following is a 155-amino-acid chain: Protein SprT-like (155 aa).

The region spanning 7 to 145 is the SprT-like domain; sequence QQHMEEVSLQ…GSCGGRLKQT (139 aa). His-67 provides a ligand contact to Zn(2+). Glu-68 is a catalytic residue. Residue His-71 participates in Zn(2+) binding.

It belongs to the SprT family. Zn(2+) is required as a cofactor.

Its subcellular location is the cytoplasm. This chain is Protein SprT-like, found in Listeria innocua serovar 6a (strain ATCC BAA-680 / CLIP 11262).